The primary structure comprises 446 residues: NADH-ubiquinone oxidoreductase chain 4 (446 aa).

13 helical membrane passes run 4–24 (IILF…YWMV), 56–76 (MLSY…LLAS), 93–113 (IVIL…FMFY), 114–134 (LFFE…GYQP), 141–161 (VYLL…IFYV), 182–202 (LLYF…LVHL), 212–232 (PVSG…YGLL), 245–265 (YSFV…LVCL), 272–292 (ALIA…LLTM), 297–317 (LCGS…LFCL), 330–350 (MLIN…WFLL), 373–393 (IVSW…FSAA), and 426–446 (LLHW…ILWL).

This sequence belongs to the complex I subunit 4 family.

The protein resides in the mitochondrion membrane. It catalyses the reaction a ubiquinone + NADH + 5 H(+)(in) = a ubiquinol + NAD(+) + 4 H(+)(out). Core subunit of the mitochondrial membrane respiratory chain NADH dehydrogenase (Complex I) that is believed to belong to the minimal assembly required for catalysis. Complex I functions in the transfer of electrons from NADH to the respiratory chain. The immediate electron acceptor for the enzyme is believed to be ubiquinone. The protein is NADH-ubiquinone oxidoreductase chain 4 (mt:ND4) of Drosophila yakuba (Fruit fly).